The chain runs to 247 residues: Probable 2-phosphosulfolactate phosphatase (247 aa).

Belongs to the ComB family. It depends on Mg(2+) as a cofactor.

The enzyme catalyses (2R)-O-phospho-3-sulfolactate + H2O = (2R)-3-sulfolactate + phosphate. The polypeptide is Probable 2-phosphosulfolactate phosphatase (Clostridium perfringens (strain SM101 / Type A)).